Here is a 101-residue protein sequence, read N- to C-terminus: NAD(P)H-quinone oxidoreductase subunit 4L, chloroplastic (101 aa).

Helical transmembrane passes span 2 to 22, 32 to 52, and 61 to 81; these read MLEH…YGLI, MCLE…SDFF, and IFSI…SAIV.

It belongs to the complex I subunit 4L family. NDH is composed of at least 16 different subunits, 5 of which are encoded in the nucleus.

It localises to the plastid. The protein localises to the chloroplast thylakoid membrane. The enzyme catalyses a plastoquinone + NADH + (n+1) H(+)(in) = a plastoquinol + NAD(+) + n H(+)(out). It catalyses the reaction a plastoquinone + NADPH + (n+1) H(+)(in) = a plastoquinol + NADP(+) + n H(+)(out). Functionally, NDH shuttles electrons from NAD(P)H:plastoquinone, via FMN and iron-sulfur (Fe-S) centers, to quinones in the photosynthetic chain and possibly in a chloroplast respiratory chain. The immediate electron acceptor for the enzyme in this species is believed to be plastoquinone. Couples the redox reaction to proton translocation, and thus conserves the redox energy in a proton gradient. The polypeptide is NAD(P)H-quinone oxidoreductase subunit 4L, chloroplastic (Gossypium barbadense (Sea Island cotton)).